Here is a 148-residue protein sequence, read N- to C-terminus: Deoxyuridine 5'-triphosphate nucleotidohydrolase (148 aa).

Substrate is bound by residues Arg-67–Gly-69, Asn-80, Leu-84–Asp-86, and Met-94.

The protein belongs to the dUTPase family. Mg(2+) serves as cofactor.

The catalysed reaction is dUTP + H2O = dUMP + diphosphate + H(+). It functions in the pathway pyrimidine metabolism; dUMP biosynthesis; dUMP from dCTP (dUTP route): step 2/2. This enzyme is involved in nucleotide metabolism: it produces dUMP, the immediate precursor of thymidine nucleotides and it decreases the intracellular concentration of dUTP so that uracil cannot be incorporated into DNA. The protein is Deoxyuridine 5'-triphosphate nucleotidohydrolase of Paraburkholderia phytofirmans (strain DSM 17436 / LMG 22146 / PsJN) (Burkholderia phytofirmans).